We begin with the raw amino-acid sequence, 677 residues long: Polyunsaturated fatty acid lipoxygenase ALOX15B (677 aa).

The region spanning 2–125 (AKFRVRVSTG…ELVLREGAAK (124 aa)) is the PLAT domain. Ca(2+) contacts are provided by Gly-15, Gly-17, Asp-39, His-40, Gly-42, Glu-44, Asp-86, and Ala-87. The Lipoxygenase domain occupies 126–677 (VSWQDHHRTL…PPLIENSVSI (552 aa)). Residues His-374, His-379, His-554, and Ile-677 each contribute to the Fe cation site.

Belongs to the lipoxygenase family. Requires Fe cation as cofactor.

It is found in the cytoplasm. The protein resides in the cytosol. It localises to the cell membrane. The protein localises to the cytoskeleton. Its subcellular location is the membrane. It is found in the cell junction. The protein resides in the adherens junction. It localises to the focal adhesion. The protein localises to the nucleus. It carries out the reaction (5Z,8Z,11Z,14Z)-eicosatetraenoate + O2 = (15S)-hydroperoxy-(5Z,8Z,11Z,13E)-eicosatetraenoate. The enzyme catalyses (9Z,12Z)-octadecadienoate + O2 = 13-hydroperoxy-(9Z,11E)-octadecadienoate. It catalyses the reaction (5S)-hydroxy-(6E,8Z,11Z,14Z)-eicosatetraenoate + O2 = (5S)-hydroxy-(15S)-hydroperoxy-(6E,8Z,11Z,13E)-eicosatetraenoate. The catalysed reaction is (5Z,8Z,11Z,14Z)-eicosatetraenoate + O2 = 5-hydroperoxy-(6E,8Z,11Z,14Z)-eicosatetraenoate. It carries out the reaction (5S,6R)-dihydroxy-(7E,9E,11Z,14Z)-eicosatetraenoate + O2 = (5S,6R)-dihydroxy-(15S)-hydroperoxy-(7E,9E,11Z,13E)-eicosatetraenoate. The enzyme catalyses (5S)-hydroperoxy-(6E,8Z,11Z,14Z)-eicosatetraenoate + O2 = (5S,15S)-dihydroperoxy-(6E,8Z,11Z,13E)-eicosatetraenoate. It catalyses the reaction 2-(5Z,8Z,11Z,14Z-eicosatetraenoyl)-glycerol + O2 = 2-[15(S)-hydroperoxy-(5Z,8Z,11Z,13E)-eicosatetraenoyl]-glycerol. The catalysed reaction is (8S)-hydroperoxy-(5Z,9E,11Z,14Z)-eicosatetraenoate + O2 = (8S,15S)-dihydroperoxy-(5Z,9E,11Z,13E)-eicosatetraenoate. It carries out the reaction N-(5Z,8Z,11Z,14Z)-eicosatetraenoyl-L-alanine + O2 = N-(15S)-hydroperoxy-(5Z,8Z,11Z,13E)-eicosatetraenoyl-alanine. The enzyme catalyses N-(5Z,8Z,11Z,14Z)-eicosatetraenoyl-gamma-aminobutanoate + O2 = N-(15S)-hydroperoxy-(5Z,8Z,11Z,13E)-eicosatetraenoyl-gamma-aminobutanoate. It catalyses the reaction N-(5Z,8Z,11Z,14Z)-eicosatetraenoyl-glycine + O2 = N-(15S)-hydroperoxy-(5Z,8Z,11Z,13E)-eicosatetraenoyl-glycine. The catalysed reaction is N-(5Z,8Z,11Z,14Z)-eicosatetraenoyl-taurine + O2 = N-(15S)-hydroperoxy-(5Z,8Z,11Z,13E)-eicosatetraenoyl-taurine. It carries out the reaction 2-(5Z,8Z,11Z,14Z-eicosatetraenoyl)-glycerol + O2 = 2-[12-hydroperoxy-(5Z,8Z,10E,14Z)-eicosatetraenoyl]-glycerol. The enzyme catalyses 1-octadecanoyl-2-(5Z,8Z,11Z,14Z-eicosatetraenoyl)-sn-glycero-3-phosphocholine + O2 = 1-octadecanoyl-2-(15-hydroperoxy-5Z,8Z,11Z,13E-eicosatetraenoyl)-sn-glycero-3-phosphocholine. It catalyses the reaction a 1-acyl-2-(5Z,8Z,11Z,14Z-eicosatetraenoyl)-sn-glycero-3-phospho-(1D-myo-inositol) + O2 = a 1-acyl-2-(15-hydroperoxy-5Z,8Z,11Z,13E-eicosatetraenoyl)-sn-glycero-3-phospho-(1D-myo-inositol). The catalysed reaction is a 1-acyl-2-(8Z,11Z,14Z-eicosatrienoyl)-sn-glycero-3-phospho-(1D-myo-inositol) + O2 = a 1-acyl-2-(15-hydroperoxy-8Z,11Z,13E-eicosatrienoyl)-sn-glycero-3-phospho-(1D-myo-inositol). It carries out the reaction 1-octadecanoyl-2-(5Z,8Z,11Z,14Z)-eicosatetraenoyl-sn-glycero-3-phosphoethanolamine + O2 = 1-octadecanoyl-2-(15-hydroperoxy-5Z,8Z,11Z,13E-eicosatetraenoyl)-sn-glycero-3-phosphoethanolamine. The enzyme catalyses 1-octadecanoyl-2-(5Z,8Z,11Z,14Z-eicosatetraenoyl)-sn-glycero-3-phospho-(1D-myo-inositol) + O2 = 1-octadecanoyl-2-(15-hydroperoxy-5Z,8Z,11Z,13E-eicosatetraenoyl)-sn-glycero-3-phospho-(1D-myo-inositol). It catalyses the reaction (8Z,11Z,14Z)-eicosatrienoate + O2 = 15-hydroperoxy-(8Z,11Z,13E)-eicosatrienoate. The catalysed reaction is (7S)-hydroperoxy-(4Z,8E,10Z,13Z,16Z,19Z)-docosahexaenoate + O2 = (7S,17S)-dihydroperoxy-(4Z,8E,10Z,13Z,15E,19Z)-docosahexaenoate. Its pathway is lipid metabolism; hydroperoxy eicosatetraenoic acid biosynthesis. In terms of biological role, non-heme iron-containing dioxygenase that catalyzes the stereo-specific peroxidation of free and esterified polyunsaturated fatty acids (PUFAs) generating a spectrum of bioactive lipid mediators. Inserts a peroxyl group at C15 of arachidonate ((5Z,8Z,11Z,14Z)-eicosatetraenoate) producing (15S)-hydroperoxyeicosatetraenoate/(15S)-HPETE. Also peroxidizes linoleate ((9Z,12Z)-octadecadienoate) to 13-hydroperoxyoctadecadienoate/13-HPODE. Oxygenates arachidonyl derivatives such as 2-arachidonoylglycerol (2-AG) leading to the production and extracellular release of 15-hydroxyeicosatetraenoyl glycerol (15-HETE-G) that acts as a peroxisome proliferator-activated receptor alpha agonist. Has the ability to efficiently class-switch ALOX5 pro-inflammatory mediators into anti-inflammatory intermediates. Participates in the sequential oxidations of DHA ((4Z,7Z,10Z,13Z,16Z,19Z)-docosahexaenoate) to generate specialized pro-resolving mediators (SPMs) resolvin D5 ((7S,17S)-diHPDHA), which can actively down-regulate the immune response and have anti-aggregation properties with platelets. In addition to free PUFAs hydrolyzed from phospholipids, it directly oxidizes PUFAs esterified to membrane-bound phospholipids. Has no detectable 8S-lipoxygenase activity on arachidonate but reacts with (8S)-HPETE to produce (8S,15S)-diHPETE. May regulate progression through the cell cycle and cell proliferation. May also regulate cytokine secretion by macrophages and therefore play a role in the immune response. May also regulate macrophage differentiation into proatherogenic foam cells. In Rattus norvegicus (Rat), this protein is Polyunsaturated fatty acid lipoxygenase ALOX15B.